The following is a 292-amino-acid chain: Ribonuclease Z (292 aa).

7 residues coordinate Zn(2+): H60, H62, D64, H65, H132, D200, and H256. D64 (proton acceptor) is an active-site residue.

This sequence belongs to the RNase Z family. As to quaternary structure, homodimer. It depends on Zn(2+) as a cofactor.

The enzyme catalyses Endonucleolytic cleavage of RNA, removing extra 3' nucleotides from tRNA precursor, generating 3' termini of tRNAs. A 3'-hydroxy group is left at the tRNA terminus and a 5'-phosphoryl group is left at the trailer molecule.. Its function is as follows. Zinc phosphodiesterase, which displays some tRNA 3'-processing endonuclease activity. Probably involved in tRNA maturation, by removing a 3'-trailer from precursor tRNA. The protein is Ribonuclease Z of Sulfolobus acidocaldarius (strain ATCC 33909 / DSM 639 / JCM 8929 / NBRC 15157 / NCIMB 11770).